The primary structure comprises 416 residues: Adenylosuccinate synthetase (416 aa).

GTP-binding positions include 13 to 19 (GDEGKGK) and 41 to 43 (GHT). Residue aspartate 14 is the Proton acceptor of the active site. The Mg(2+) site is built by aspartate 14 and glycine 41. IMP is bound by residues 14-17 (DEGK), 39-42 (NAGH), threonine 126, arginine 140, glutamine 220, threonine 235, and arginine 299. The Proton donor role is filled by histidine 42. 295 to 301 (TTTGRKR) lines the substrate pocket. Residues arginine 301, 327–329 (KLD), and 405–407 (STS) each bind GTP.

The protein belongs to the adenylosuccinate synthetase family. Homodimer. It depends on Mg(2+) as a cofactor.

The protein localises to the cytoplasm. The catalysed reaction is IMP + L-aspartate + GTP = N(6)-(1,2-dicarboxyethyl)-AMP + GDP + phosphate + 2 H(+). It participates in purine metabolism; AMP biosynthesis via de novo pathway; AMP from IMP: step 1/2. Functionally, plays an important role in the de novo pathway of purine nucleotide biosynthesis. Catalyzes the first committed step in the biosynthesis of AMP from IMP. This is Adenylosuccinate synthetase from Campylobacter fetus subsp. fetus (strain 82-40).